A 505-amino-acid polypeptide reads, in one-letter code: MFS-type transporter oryN (505 aa).

The disordered stretch occupies residues 1–54 (MAVAELPNIVSTDSSPSPHPGSRLSSEPTDIESQKAPSNAEPKTDPNLVTWDGP). 13 consecutive transmembrane segments (helical) span residues 69–89 (AFVT…SSIF), 106–126 (VVTL…PVWG), 135–155 (KWPM…VAVA), 166–186 (FLTG…LVDM), 193–213 (GVAM…APLM), 226–246 (FTQW…VFGL), 280–300 (GIKD…VTEP), 301–321 (ILLL…LVFV), 337–357 (ISAL…AIVV), 376–396 (LPLM…FAWT), 401–421 (IHWA…YMVF), 440–460 (IGAN…FGPF), and 468–488 (AWAS…PVLF).

It belongs to the major facilitator superfamily. CAR1 family.

It is found in the membrane. Its function is as follows. MFS-type transporter; part of the gene cluster that mediates the biosynthesis of oryzines, natural products with an unusual maleidride backbone. This is MFS-type transporter oryN from Aspergillus oryzae (strain ATCC 42149 / RIB 40) (Yellow koji mold).